A 330-amino-acid chain; its full sequence is 2-alkyl-3-oxoalkanoate reductase (330 aa).

Tyrosine 139 functions as the Proton acceptor in the catalytic mechanism. An NADP(+)-binding site is contributed by lysine 143.

This sequence belongs to the 3-beta-HSD family. As to quaternary structure, homodimer.

It catalyses the reaction a (2R,3S)-2-alkyl-3-hydroxyalkanoate + NADP(+) = an (R)-2-alkyl-3-oxoalkanoate + NADPH + H(+). Functionally, involved in olefin biosynthesis. Catalyzes the reversible stereospecific NADPH-dependent reduction of 2-alkyl-3-oxoalkanoic acids to 2-alkyl-3-hydroxyalkanoic acids. In the oxidative direction, syn-2-decyl-3-hydroxytetradecanoic acid is the preferred substrate. In the reductive direction, (2R/S)-2-hexyl-3-ketodecanoic acid is accepted as substrate. The polypeptide is 2-alkyl-3-oxoalkanoate reductase (Stenotrophomonas maltophilia (strain K279a)).